A 161-amino-acid polypeptide reads, in one-letter code: Nucleotide-binding protein Daci_4781 (161 aa).

This sequence belongs to the YajQ family.

In terms of biological role, nucleotide-binding protein. This chain is Nucleotide-binding protein Daci_4781, found in Delftia acidovorans (strain DSM 14801 / SPH-1).